The chain runs to 185 residues: Elongation factor P (185 aa).

Belongs to the elongation factor P family.

It localises to the cytoplasm. The protein operates within protein biosynthesis; polypeptide chain elongation. Its function is as follows. Involved in peptide bond synthesis. Stimulates efficient translation and peptide-bond synthesis on native or reconstituted 70S ribosomes in vitro. Probably functions indirectly by altering the affinity of the ribosome for aminoacyl-tRNA, thus increasing their reactivity as acceptors for peptidyl transferase. The chain is Elongation factor P from Acetivibrio thermocellus (strain ATCC 27405 / DSM 1237 / JCM 9322 / NBRC 103400 / NCIMB 10682 / NRRL B-4536 / VPI 7372) (Clostridium thermocellum).